The sequence spans 259 residues: Energy-coupling factor transporter ATP-binding protein EcfA1 (259 aa).

The 228-residue stretch at 3-230 (ITLNSVSFRY…EFDDVEIPFK (228 aa)) folds into the ABC transporter domain. Residue 38–43 (GSGKTT) participates in ATP binding. E157 functions as the Proton acceptor in the catalytic mechanism.

The protein belongs to the ABC transporter superfamily. Energy-coupling factor EcfA family. As to quaternary structure, forms a heterodimer with EcfA2. Forms a stable energy-coupling factor (ECF) transporter complex composed of 2 membrane-embedded substrate-binding proteins (S component, RibU, BioY), 2 ATP-binding proteins (A component) and 2 transmembrane proteins (T component) upon coexpression in E.coli. Stable subcomplexes with both A plus T components can also be isolated. This complex interacts with at least 2 substrate-specific components, BioY and RibU.

The protein localises to the cell inner membrane. Its function is as follows. ATP-binding (A) component of a common energy-coupling factor (ECF) ABC-transporter complex. Unlike classic ABC transporters this ECF transporter provides the energy necessary to transport a number of different substrates. Expression of the complex plus RibU in E.coli allows riboflavin uptake; uptake does not occur in the absence of RibU or the EcfA1A2T complex. This is Energy-coupling factor transporter ATP-binding protein EcfA1 from Thermotoga maritima (strain ATCC 43589 / DSM 3109 / JCM 10099 / NBRC 100826 / MSB8).